The chain runs to 287 residues: ATP synthase gamma chain (287 aa).

The protein belongs to the ATPase gamma chain family. As to quaternary structure, F-type ATPases have 2 components, CF(1) - the catalytic core - and CF(0) - the membrane proton channel. CF(1) has five subunits: alpha(3), beta(3), gamma(1), delta(1), epsilon(1). CF(0) has three main subunits: a, b and c.

It localises to the cell inner membrane. Produces ATP from ADP in the presence of a proton gradient across the membrane. The gamma chain is believed to be important in regulating ATPase activity and the flow of protons through the CF(0) complex. This is ATP synthase gamma chain from Geotalea uraniireducens (strain Rf4) (Geobacter uraniireducens).